The chain runs to 959 residues: Protovillin (959 aa).

Positions 1-53 (MEPPLELPTQRKRVIPSKFGILKRNAEIEAEKNRENLQQSSCFSHINEIGKEI) are tail. Residues 54–832 (GLEIWKIIDD…PIMLPTSGVT (779 aa)) are core. Gelsolin-like repeat units follow at residues 64–116 (STIQ…SQET), 204–244 (IRVK…LEKG), 309–366 (IKLY…DQRT), 479–529 (RNKF…EDKG), 603–647 (INIH…KEAA), and 713–754 (FKVF…TEKL). 2 repeat units span residues 840–849 (TPKPITTPTV) and 851–860 (TPKPITTPTV). A 2 X 10 AA repeats of T-P-K-P-I-T-T-P-T-V region spans residues 840-860 (TPKPITTPTVTTPKPITTPTV). Residues 895 to 959 (TTITTFYPLS…KQLRVDNGLF (65 aa)) enclose the HP domain.

Belongs to the villin/gelsolin family.

It is found in the cytoplasm. The protein localises to the cytoskeleton. In terms of biological role, caps actin filaments but displays neither severing nor cross-linking nor nucleating activities. Protovillin seems to be a villin precursor with only archaic capping activity. It lacks essential changes in the sequence to allow bundling of actin filaments and consequently the appearance of microvilli. The protein is Protovillin (vilB) of Dictyostelium discoideum (Social amoeba).